A 904-amino-acid polypeptide reads, in one-letter code: Pantothenate kinase 2 (904 aa).

Residues 1 to 56 (MAANNNSDPILDEGGGGGVKHEAVGEAGEGKGGGGGAAATQAPAAMLPRSGSRPQL) are disordered. The pantothenate kinase stretch occupies residues 1–472 (MAANNNSDPI…LGDLNEKISW (472 aa)). The interval 473–904 (MEKFVQKGTQ…DCICKFEPVP (432 aa)) is 4'-phosphopantetheine phosphatase. Residues Asp-735, Asn-736, and Asp-771 each coordinate Mn(2+). The Subfamily II EGMGR motif motif lies at 855–859 (EGMGR).

In the N-terminal section; belongs to the type II pantothenate kinase family. It in the C-terminal section; belongs to the damage-control phosphatase family. Phosphopantetheine phosphatase II subfamily. Mn(2+) is required as a cofactor. It depends on Ni(2+) as a cofactor.

It catalyses the reaction (R)-pantothenate + ATP = (R)-4'-phosphopantothenate + ADP + H(+). It carries out the reaction (R)-4'-phosphopantothenate + H2O = (R)-pantothenate + phosphate. The catalysed reaction is (R)-4'-phosphopantetheine + H2O = (R)-pantetheine + phosphate. The enzyme catalyses (R)-4'-phosphopantetheine sulfonate + H2O = (R)-pantetheine sulfonate + phosphate. It functions in the pathway cofactor biosynthesis; coenzyme A biosynthesis; CoA from (R)-pantothenate: step 1/5. In terms of biological role, catalyzes the phosphorylation of pantothenate the first step in CoA biosynthesis. May play a role in the physiological regulation of the intracellular CoA concentration. Functionally redudant with PANK1. The phosphatase activity shows preference for normal or oxidatively damaged intermediates of 4'-phosphopantetheine, which provides strong indirect evidence that the phosphatase activity pre-empts damage in the CoA pathway. Hydrolyzing excess 4'-phosphopantetheine could constitute a directed overflow mechanism to prevent its oxidation to the S-sulfonate, sulfonate, or other forms. Hydrolyzing 4'-phosphopantetheine sulfonate or S-sulfonate would forestall their conversion to inactive forms of CoA and acyl carrier protein. This is Pantothenate kinase 2 from Oryza sativa subsp. japonica (Rice).